A 101-amino-acid chain; its full sequence is Protein RnfH (101 aa).

Belongs to the UPF0125 (RnfH) family.

The polypeptide is Protein RnfH (Pseudomonas aeruginosa (strain UCBPP-PA14)).